We begin with the raw amino-acid sequence, 316 residues long: Protein YIPF2 (316 aa).

Alanine 2 is modified (N-acetylalanine). Over 2–124 (ASADELTFHE…LRNRPDLYGP (123 aa)) the chain is Cytoplasmic. The tract at residues 16-37 (TNLLADTPDAATTSRSDQLTPQ) is disordered. Positions 25–36 (AATTSRSDQLTP) are enriched in polar residues. The helical transmembrane segment at 125-145 (FWICATLAFVLAVTGNLTLVL) threads the bilayer. The Lumenal segment spans residues 146–163 (AQRRDPSIHYSPQFHKVT). Residues 164–184 (VAGISIYCYAWLVPLALWGFL) form a helical membrane-spanning segment. The Cytoplasmic segment spans residues 185–196 (RWRKGVQERMGP). A helical transmembrane segment spans residues 197 to 219 (YTFLETVCIYGYSLFVFIPMVVL). Topologically, residues 220-231 (WLIPVPWLQWLF) are lumenal. The chain crosses the membrane as a helical span at residues 232 to 252 (GALALGLSAAGLVFTLWPVVR). The Cytoplasmic segment spans residues 253–256 (EDTR). A helical transmembrane segment spans residues 257-277 (LVATVLLSVVVLLHALLAMGC). Residues 278–316 (KLYFFQSLPPENVAPPPQITSLPSNIALSPTLPQSLAPS) lie on the Lumenal side of the membrane.

It belongs to the YIP1 family. As to quaternary structure, interacts with YIPF6; this interaction may stabilize YIPF2. May also form a ternary complex with YIPF1 and YIPF6.

The protein resides in the golgi apparatus. The protein localises to the cis-Golgi network membrane. It is found in the trans-Golgi network membrane. It localises to the late endosome membrane. This chain is Protein YIPF2 (YIPF2), found in Homo sapiens (Human).